The chain runs to 1437 residues: CRISPR-associated endoribonuclease Cas13a (1437 aa).

HEPN-like fold stretches follow at residues 460–626 (LNAS…AMFE) and 1101–1437 (EFRD…QLKN). Positions 1377–1419 (EVKEKKKPSDNNTGKGYSKRDRQQDRKEYDKYKEKKKKEGNFL) are disordered. Residues 1394-1416 (SKRDRQQDRKEYDKYKEKKKKEG) are compositionally biased toward basic and acidic residues.

The protein belongs to the CRISPR-associated endoribonuclease Cas13a family. A divalent metal cation is required as a cofactor.

Target RNA acts as an activator for non-specific ssRNA degradation. Functionally, CRISPR (clustered regularly interspaced short palindromic repeat), is an adaptive immune system that provides protection against mobile genetic elements (viruses, transposable elements and conjugative plasmids). CRISPR clusters contain sequences complementary to antecedent mobile elements and target invading nucleic acids. Unlike many single-component effectors, this CRISPR-Cas system targets RNA. CRISPR clusters are transcribed from pre-CRISPR RNA (crRNA) and processed into crRNA by this protein. Cleaves linear target ssRNA in a pre-crRNA-dependent fashion, preferentially around A residues. Binding a viable target RNA target activates this protein for non-specific RNA degradation in vitro (called collateral RNA degradation), but it is not very sensitive as it requires nanomolar levels of viable target RNA. This chain is CRISPR-associated endoribonuclease Cas13a, found in Lachnospiraceae bacterium (strain NK4A179).